Reading from the N-terminus, the 541-residue chain is Chaperonin GroEL 2 (541 aa).

ATP contacts are provided by residues 29-32 (TLGP), 86-90 (DGTTT), Gly-413, 476-478 (NAA), and Asp-492.

This sequence belongs to the chaperonin (HSP60) family. Forms a cylinder of 14 subunits composed of two heptameric rings stacked back-to-back. Interacts with the co-chaperonin GroES.

Its subcellular location is the cytoplasm. The enzyme catalyses ATP + H2O + a folded polypeptide = ADP + phosphate + an unfolded polypeptide.. Functionally, together with its co-chaperonin GroES, plays an essential role in assisting protein folding. The GroEL-GroES system forms a nano-cage that allows encapsulation of the non-native substrate proteins and provides a physical environment optimized to promote and accelerate protein folding. The sequence is that of Chaperonin GroEL 2 from Streptomyces avermitilis (strain ATCC 31267 / DSM 46492 / JCM 5070 / NBRC 14893 / NCIMB 12804 / NRRL 8165 / MA-4680).